The chain runs to 297 residues: Coiled-coil domain-containing protein 159 (297 aa).

The stretch at 147–297 (EELELVREEV…SKSGRSFPPA (151 aa)) forms a coiled coil. A disordered region spans residues 256-297 (LRGHKGHQCLSPPLPSWDSDSDCDQDLSQPPFSKSGRSFPPA).

In terms of assembly, interacts with DYNLT2. Interacts with GGNBP1. Interacts with OSBP2.

In terms of biological role, functions during spermatid development; may participate in the centrosome reduction procedure of spermatids and is required for the formation of the connecting piece/sperm head-tail coupling apparatus (HTCA) and the correct and tight attachment of the flagellum to the nuclear envelope. This chain is Coiled-coil domain-containing protein 159 (CCDC159), found in Homo sapiens (Human).